Here is a 776-residue protein sequence, read N- to C-terminus: Calcium-independent phospholipase A2-gamma (776 aa).

2 stretches are compositionally biased toward basic and acidic residues: residues 226-238 (RQLQ…EESK) and 307-331 (LKSD…ICKD). Disordered stretches follow at residues 226–274 (RQLQ…EALP) and 306–331 (KLKS…ICKD). Positions 439–634 (LAIDGGGTRG…LLNNPSALAL (196 aa)) constitute a PNPLA domain. A GXGXXG motif is present at residues 443–448 (GGGTRG). A helical transmembrane segment spans residues 469-489 (LFDYICGVSTGAILAFMLGLF). The GXSXG signature appears at 475–479 (GVSTG). Ser477 serves as the catalytic Nucleophile. The active-site Proton acceptor is the Asp621. The DGA/G motif lies at 621 to 623 (DGG). Lys730 bears the N6-succinyllysine mark.

Its subcellular location is the endoplasmic reticulum membrane. It is found in the microsome membrane. The protein resides in the mitochondrion membrane. It localises to the peroxisome membrane. The enzyme catalyses a 1,2-diacyl-sn-glycero-3-phosphocholine + H2O = a 1-acyl-sn-glycero-3-phosphocholine + a fatty acid + H(+). It catalyses the reaction a 1,2-diacyl-sn-glycero-3-phosphocholine + H2O = a 2-acyl-sn-glycero-3-phosphocholine + a fatty acid + H(+). It carries out the reaction a 1,2-diacyl-sn-glycero-3-phosphoethanolamine + H2O = a 1-acyl-sn-glycero-3-phosphoethanolamine + a fatty acid + H(+). The catalysed reaction is a 1-O-(1Z-alkenyl)-2-acyl-sn-glycero-3-phosphocholine + H2O = a 1-O-(1Z-alkenyl)-sn-glycero-3-phosphocholine + a fatty acid + H(+). The enzyme catalyses a 1-acyl-sn-glycero-3-phosphocholine + H2O = sn-glycerol 3-phosphocholine + a fatty acid + H(+). It catalyses the reaction 1-acyl-2-(9Z,12Z)-octadecadienoyl-sn-glycero-3-phosphocholine + H2O = a 1-acyl-sn-glycero-3-phosphocholine + (9Z,12Z)-octadecadienoate + H(+). It carries out the reaction 1-acyl-2-(5Z,8Z,11Z,14Z-eicosatetraenoyl)-sn-glycero-3-phosphocholine + H2O = a 1-acyl-sn-glycero-3-phosphocholine + (5Z,8Z,11Z,14Z)-eicosatetraenoate + H(+). The catalysed reaction is 1-hexadecanoyl-2-(5Z,8Z,11Z,14Z-eicosatetraenoyl)-sn-glycero-3-phosphocholine + H2O = 1-hexadecanoyl-sn-glycero-3-phosphocholine + (5Z,8Z,11Z,14Z)-eicosatetraenoate + H(+). The enzyme catalyses 1-octadecanoyl-2-(9Z-octadecenoyl)-sn-glycero-3-phosphocholine + H2O = 1-octadecanoyl-sn-glycero-3-phosphocholine + (9Z)-octadecenoate + H(+). It catalyses the reaction 1-hexadecanoyl-2-(9Z-octadecenoyl)-sn-glycero-3-phosphocholine + H2O = 1-hexadecanoyl-sn-glycero-3-phosphocholine + (9Z)-octadecenoate + H(+). It carries out the reaction 1-hexadecanoyl-2-(9Z,12Z-octadecadienoyl)-sn-glycero-3-phosphocholine + H2O = (9Z,12Z)-octadecadienoate + 1-hexadecanoyl-sn-glycero-3-phosphocholine + H(+). The catalysed reaction is 1-acyl-2-(9Z,12Z)-octadecadienoyl-sn-glycero-3-phosphoethanolamine + H2O = a 1-acyl-sn-glycero-3-phosphoethanolamine + (9Z,12Z)-octadecadienoate + H(+). The enzyme catalyses 1-acyl-2-(5Z,8Z,11Z,14Z)-eicosatetraenoyl-sn-glycero-3-phosphoethanolamine + H2O = a 1-acyl-sn-glycero-3-phosphoethanolamine + (5Z,8Z,11Z,14Z)-eicosatetraenoate + H(+). It catalyses the reaction 1-hexadecanoyl-2-(5Z,8Z,11Z,14Z-eicosatetraenoyl)-sn-glycero-3-phosphoethanolamine + H2O = 1-hexadecanoyl-sn-glycero-3-phosphoethanolamine + (5Z,8Z,11Z,14Z)-eicosatetraenoate + H(+). It carries out the reaction 1-hexadecanoyl-2-(5Z,8Z,11Z,14Z-eicosatetraenoyl)-sn-glycero-3-phosphocholine + H2O = 2-(5Z,8Z,11Z,14Z)-eicosatetraenoyl-sn-glycero-3-phosphocholine + hexadecanoate + H(+). The catalysed reaction is 1-octadecanoyl-2-(9Z-octadecenoyl)-sn-glycero-3-phosphocholine + H2O = 2-(9Z-octadecenoyl)-sn-glycero-3-phosphocholine + octadecanoate + H(+). The enzyme catalyses 1-hexadecanoyl-2-(4Z,7Z,10Z,13Z,16Z,19Z-docosahexaenoyl)-sn-glycero-3-phosphocholine + H2O = 2-(4Z,7Z,10Z,13Z,16Z,19Z-docosahexaenoyl)-sn-glycero-3-phosphocholine + hexadecanoate + H(+). It catalyses the reaction 1-O-(1Z)-hexadecenyl-2 (5Z,8Z,11Z,14Z)-eicosatetraenoyl-sn-glycero-3-phosphocholine + H2O = 1-(1Z-hexadecenyl)-sn-glycero-3-phosphocholine + (5Z,8Z,11Z,14Z)-eicosatetraenoate + H(+). It carries out the reaction 1-O-(1Z-hexadecenyl)-2-(9Z-octadecenoyl)-sn-glycero-3-phosphocholine + H2O = 1-(1Z-hexadecenyl)-sn-glycero-3-phosphocholine + (9Z)-octadecenoate + H(+). The catalysed reaction is 1-hexadecanoyl-sn-glycero-3-phosphocholine + H2O = sn-glycerol 3-phosphocholine + hexadecanoate + H(+). The enzyme catalyses 1',3'-bis-[1,2-di-(9Z,12Z-octadecadienoyl)-sn-glycero-3-phospho]-glycerol + H2O = 1'-[1,2-di-(9Z,12Z-octadecadienoyl)-sn-glycero-3-phospho]-3'-[1-(9Z,12Z-octadecadienoyl)-sn-glycero-3-phospho]-glycerol + (9Z,12Z)-octadecadienoate + H(+). It catalyses the reaction 1'-[1-acyl-2-(9-hydroxy-(10E,12Z)-octadecadienoyl)-sn-glycero-3-phospho]-3'-[1,2-diacyl-sn-glycero-3-phospho]-glycerol + H2O = 9-hydroxy-(10E,12Z)-octadecadienoate + 1'-[1,2-diacyl-sn-glycero-3-phospho],3'-[1-acyl-sn-glycero-3-phospho]-glycerol + H(+). It functions in the pathway phospholipid metabolism. With respect to regulation, calcium-independent phospholipase. Its function is as follows. Calcium-independent and membrane-bound phospholipase, that catalyzes the esterolytic cleavage of fatty acids from glycerophospholipids to yield free fatty acids and lysophospholipids, hence regulating membrane physical properties and the release of lipid second messengers and growth factors. Hydrolyzes phosphatidylethanolamine, phosphatidylcholine and probably phosphatidylinositol with a possible preference for the former. Has also a broad substrate specificity in terms of fatty acid moieties, hydrolyzing saturated and mono-unsaturated fatty acids at nearly equal rates from either the sn-1 or sn-2 position in diacyl phosphatidylcholine. However, has a weak activity toward polyunsaturated fatty acids at the sn-2 position, and thereby favors the production of 2-arachidonoyl lysophosphatidylcholine, a key branch point metabolite in eicosanoid signaling. On the other hand, can produce arachidonic acid from the sn-1 position of diacyl phospholipid and from the sn-2 position of arachidonate-containing plasmalogen substrates. Therefore, plays an important role in the mobilization of arachidonic acid in response to cellular stimuli and the generation of lipid second messengers. Can also hydrolyze lysophosphatidylcholine. In the mitochondrial compartment, catalyzes the hydrolysis and release of oxidized aliphatic chains from cardiolipin and integrates mitochondrial bioenergetics and signaling. It is essential for maintaining efficient bioenergetic mitochondrial function through tailoring mitochondrial membrane lipid metabolism and composition. This chain is Calcium-independent phospholipase A2-gamma, found in Rattus norvegicus (Rat).